Reading from the N-terminus, the 178-residue chain is Large ribosomal subunit protein uL6 (178 aa).

The protein belongs to the universal ribosomal protein uL6 family. As to quaternary structure, part of the 50S ribosomal subunit.

In terms of biological role, this protein binds to the 23S rRNA, and is important in its secondary structure. It is located near the subunit interface in the base of the L7/L12 stalk, and near the tRNA binding site of the peptidyltransferase center. In Corynebacterium urealyticum (strain ATCC 43042 / DSM 7109), this protein is Large ribosomal subunit protein uL6.